The chain runs to 382 residues: ADP,ATP carrier protein, mitochondrial (382 aa).

A mitochondrion-targeting transit peptide spans 1-71; that stretch reads MAEQANQPTV…PMMSSSPIFA (71 aa). Solcar repeat units follow at residues 80–173, 185–277, and 285–371; these read KNFM…FKRL, KWFG…LKPV, and DNFF…LQIL. 5 consecutive transmembrane segments (helical) span residues 82-109, 150-174, 183-203, 253-274, and 288-308; these read FMIDFLMGGVSAAVSKTAAAPIERVKLL, TANVIRYFPTQALNFAFKDYFKRLF, YWKWFGGNLASGGAAGASSLF, FNISCVGIIVYRGLYFGMYDSL, and FASFALGWLITNGAGLASYPI. ADP is bound by residues Arg155 and Lys167. Arg312 contributes to the ADP binding site. Positions 312–317 are important for transport activity; it reads RRRMMM. A Nucleotide carrier signature motif motif is present at residues 312 to 317; the sequence is RRRMMM. Residues 348 to 368 traverse the membrane as a helical segment; sequence AGANILRAIAGAGVLSGYDQL.

The protein belongs to the mitochondrial carrier (TC 2.A.29) family. As to quaternary structure, monomer.

It localises to the mitochondrion inner membrane. The catalysed reaction is ADP(in) + ATP(out) = ADP(out) + ATP(in). Its activity is regulated as follows. The matrix-open state (m-state) is inhibited by the membrane-permeable bongkrekic acid (BKA). The cytoplasmic-open state (c-state) is inhibited by the membrane-impermeable toxic inhibitor carboxyatractyloside (CATR). ADP:ATP antiporter that mediates import of ADP into the mitochondrial matrix for ATP synthesis, and export of ATP out to fuel the cell. Cycles between the cytoplasmic-open state (c-state) and the matrix-open state (m-state): operates by the alternating access mechanism with a single substrate-binding site intermittently exposed to either the cytosolic (c-state) or matrix (m-state) side of the inner mitochondrial membrane. This chain is ADP,ATP carrier protein, mitochondrial, found in Oryza sativa subsp. japonica (Rice).